A 227-amino-acid chain; its full sequence is 2-C-methyl-D-erythritol 4-phosphate cytidylyltransferase (227 aa).

Belongs to the IspD/TarI cytidylyltransferase family. IspD subfamily.

It carries out the reaction 2-C-methyl-D-erythritol 4-phosphate + CTP + H(+) = 4-CDP-2-C-methyl-D-erythritol + diphosphate. It participates in isoprenoid biosynthesis; isopentenyl diphosphate biosynthesis via DXP pathway; isopentenyl diphosphate from 1-deoxy-D-xylulose 5-phosphate: step 2/6. In terms of biological role, catalyzes the formation of 4-diphosphocytidyl-2-C-methyl-D-erythritol from CTP and 2-C-methyl-D-erythritol 4-phosphate (MEP). The polypeptide is 2-C-methyl-D-erythritol 4-phosphate cytidylyltransferase (Lachnospira eligens (strain ATCC 27750 / DSM 3376 / VPI C15-48 / C15-B4) (Eubacterium eligens)).